A 170-amino-acid chain; its full sequence is MVETTQHFVSIESSNRPDPANTTPANYSIQLPQRYRNIWSAMLVNIALPAVSPPQKYVYLDIDKLNSIDSTSPSGGVNFALAKIPLSIAGTGNVFFADTMTSSFPNVPLQNPVATMDKLNIKLKDANGNVLTIPAGNEHSFMIQLTCGDYIPRGGGSTITQNGRVLGGTR.

A disordered region spans residues 1–25 (MVETTQHFVSIESSNRPDPANTTPA). N-linked (Glc...) asparagine; by host glycans are attached at residues asparagine 21, asparagine 93, asparagine 129, and asparagine 137.

Glycosylated. The pattern of glycosylation sites are unusual.

The protein resides in the virion. In terms of biological role, constitutes the 12 pentameric capsomers positioned at the 5-fold vertices of the outer capsid shell. One of the vertex is composed of a variant of P1 (type II pentameric capsomer) and has thereby a structure slightly different from the other verteces (type I pentameric capsomers). The polypeptide is Penton capsid protein P1 (Paramecium bursaria Chlorella virus 1 (PBCV-1)).